We begin with the raw amino-acid sequence, 361 residues long: POU domain, class 3, transcription factor 4-A (361 aa).

3 disordered regions span residues 100 to 131 (HVNH…GQPI), 150 to 189 (LTPP…EETP), and 333 to 361 (EKRM…CNEL). Over residues 119–131 (AHNSSLTSSGQPI) the composition is skewed to polar residues. Over residues 165–183 (VLREPNDHVDLGSHHCQDH) the composition is skewed to basic and acidic residues. In terms of domain architecture, POU-specific spans 186 to 260 (EETPTSDELE…LLNKWLEEAD (75 aa)). Residues 278 to 337 (KRKKRTSIEVSVKGVLETHFLKCPKPAALEITSLADSLQLEKEVVRVWFCNRRQKEKRMT) constitute a DNA-binding region (homeobox).

This sequence belongs to the POU transcription factor family. Class-3 subfamily. As to expression, from embryonic stage 10, expressed in the Spemann's organizer. During gastrulation, expressed in both the involuting mesoderm and the overlying neuroectoderm. During the neural plate and neural fold stages, expressed in the entire neuroectoderm with expression in discrete regions of the developing nervous system persisting at later stages. Transiently expressed in the pronephros from stages 24-32. In adults, expressed in the kidney and brain.

It is found in the nucleus. Transcriptional activator. Induces neural-specific gene expression to act as a key regulator of neural differentiation. This chain is POU domain, class 3, transcription factor 4-A (pou3f4-a), found in Xenopus laevis (African clawed frog).